We begin with the raw amino-acid sequence, 173 residues long: MIRYIKGDLLGHLPPSKSSVAVFAHACNCQGVWGGGIAAVLRVKFPSTYPLYSGHCQEKGCDPHRLLGTSVVVPSQASDPGNIAGYPPKYIACLFTSDFAQTQEEIVAYTDSAIEALVDQLKELQKTTAIETGQSGKIVVNMPKINAGIFAVPWEKTEAVLKKYDVEFNVYVI.

Positions 1-173 constitute a Macro domain; it reads MIRYIKGDLL…YDVEFNVYVI (173 aa). Residues 7–9, 26–28, 33–38, and 145–151 contribute to the substrate site; these read GDL, ACN, WGGGIA, and INAGIFA.

The protein belongs to the POA1 family.

It carries out the reaction ADP-alpha-D-ribose 1''-phosphate + H2O = ADP-D-ribose + phosphate. In terms of biological role, highly specific phosphatase involved in the metabolism of ADP-ribose 1''-phosphate (Appr1p) which is produced as a consequence of tRNA splicing. This is ADP-ribose 1''-phosphate phosphatase (POA1) from Scheffersomyces stipitis (strain ATCC 58785 / CBS 6054 / NBRC 10063 / NRRL Y-11545) (Yeast).